The sequence spans 727 residues: Pre-B-cell leukemia transcription factor-interacting protein 1 (727 aa).

Polar residues predominate over residues 1–10; the sequence is MASCPDSDNS. Residues 1 to 135 form a disordered region; it reads MASCPDSDNS…SPHRSLPSSP (135 aa). The segment covering 39-53 has biased composition (low complexity); that stretch reads RAPQSPSRAAAEESA. S43 bears the Phosphoserine mark. A compositionally biased stretch (polar residues) spans 61–70; it reads TVSQNESSKS. A phosphoserine mark is found at S130, S134, S147, S148, and S149. Position 153 is a phosphothreonine (T153). Coiled-coil stretches lie at residues 269-353 and 380-421; these read QNMA…QGAD and SPGF…SLKE. The short motif at 488-506 is the Nuclear localization signal element; the sequence is WKTEHWKHKKEASGREKSW. Disordered stretches follow at residues 491 to 568 and 701 to 727; these read EHWK…AKDR and KRSG…HRQG. Basic and acidic residues-rich tracts occupy residues 498 to 544, 551 to 568, and 716 to 727; these read EASG…EPPR, PSGE…AKDR, and GPREEHSPHRQG. Residues 696–719 carry the Nuclear localization signal motif; sequence DKALKKRSGKKDKHLQNRVVGPRE.

In terms of assembly, interacts with ESR1, PBX1, PBX2 and PBX3. Interacts with TEX11.

The protein resides in the cytoplasm. It is found in the cytoskeleton. Its subcellular location is the nucleus. Its function is as follows. Regulator of pre-B-cell leukemia transcription factors (BPXs) function. Inhibits the binding of PBX1-HOX complex to DNA and blocks the transcriptional activity of E2A-PBX1. Tethers estrogen receptor-alpha (ESR1) to microtubules and allows them to influence estrogen receptors-alpha signaling. The sequence is that of Pre-B-cell leukemia transcription factor-interacting protein 1 (PBXIP1) from Bos taurus (Bovine).